The sequence spans 433 residues: Glutamate-1-semialdehyde 2,1-aminomutase (433 aa).

Lys273 is modified (N6-(pyridoxal phosphate)lysine).

It belongs to the class-III pyridoxal-phosphate-dependent aminotransferase family. HemL subfamily. Homodimer. Requires pyridoxal 5'-phosphate as cofactor.

It is found in the cytoplasm. It carries out the reaction (S)-4-amino-5-oxopentanoate = 5-aminolevulinate. The protein operates within porphyrin-containing compound metabolism; protoporphyrin-IX biosynthesis; 5-aminolevulinate from L-glutamyl-tRNA(Glu): step 2/2. This Polynucleobacter necessarius subsp. necessarius (strain STIR1) protein is Glutamate-1-semialdehyde 2,1-aminomutase.